The sequence spans 358 residues: Methionine aminopeptidase 2 (358 aa).

Histidine 109 contacts substrate. The a divalent metal cation site is built by aspartate 130, aspartate 141, and histidine 210. Histidine 218 provides a ligand contact to substrate. The a divalent metal cation site is built by glutamate 243 and glutamate 339.

This sequence belongs to the peptidase M24A family. Methionine aminopeptidase eukaryotic type 2 subfamily. Requires Co(2+) as cofactor. The cofactor is Zn(2+). Mn(2+) is required as a cofactor. Fe(2+) serves as cofactor.

It is found in the cytoplasm. The catalysed reaction is Release of N-terminal amino acids, preferentially methionine, from peptides and arylamides.. In terms of biological role, cotranslationally removes the N-terminal methionine from nascent proteins. The N-terminal methionine is often cleaved when the second residue in the primary sequence is small and uncharged (Met-Ala-, Cys, Gly, Pro, Ser, Thr, or Val). This Encephalitozoon intestinalis (strain ATCC 50506) (Microsporidian parasite) protein is Methionine aminopeptidase 2.